A 490-amino-acid chain; its full sequence is Cysteine--tRNA ligase (490 aa).

Residue C43 coordinates Zn(2+). The 'HIGH' region signature appears at 45–55 (MTVQSSPHLGH). A disordered region spans residues 177 to 204 (VDEMSPAEDSDPRGKRDPRDFALWKGHK). A compositionally biased stretch (basic and acidic residues) spans 186 to 204 (SDPRGKRDPRDFALWKGHK). Zn(2+)-binding residues include C228, H253, and E257. A 'KMSKS' region motif is present at residues 284–288 (KMSKS). Position 287 (K287) interacts with ATP.

This sequence belongs to the class-I aminoacyl-tRNA synthetase family. In terms of assembly, monomer. The cofactor is Zn(2+).

The protein resides in the cytoplasm. It catalyses the reaction tRNA(Cys) + L-cysteine + ATP = L-cysteinyl-tRNA(Cys) + AMP + diphosphate. The sequence is that of Cysteine--tRNA ligase from Cutibacterium acnes (strain DSM 16379 / KPA171202) (Propionibacterium acnes).